We begin with the raw amino-acid sequence, 317 residues long: MTEQMTVRGTLKGHSGWVTQIATTPQFPDMILSASRDKTIIMWKLTRDETNYGIPQRALRGHSHFVSDVVISSDGQFALSGSWDGTLRLWDLTTGTTTRRFVGHTKDVLSVAFSADNRQIVSGSRDKTIKLWNTLGVCKYTIQDDSHTEWVSCVRFSPNSSNPIIVSCGWDKMVKVWNLANCKLKTNHIGHTGYLNTVTVSPDGSLCASGGKDGQAMLWDLNEGKHLYTLDGGDTINALCFSPNRYWLCAATGPSIKIWDLEGKIIVDELRQDIITTNSKAEPPQCTSLAWSADGQTLFAGYTDNLIRVWQVTIGTR.

WD repeat units lie at residues 13–44, 61–91, 103–133, 146–178, 190–220, 231–260, and 281–311; these read GHSGWVTQIATTPQFPDMILSASRDKTIIMWK, GHSHFVSDVVISSDGQFALSGSWDGTLRLWD, GHTKDVLSVAFSADNRQIVSGSRDKTIKLWN, SHTEWVSCVRFSPNSSNPIIVSCGWDKMVKVWN, GHTGYLNTVTVSPDGSLCASGGKDGQAMLWD, DGGDTINALCFSPNRYWLCAATGPSIKIWD, and AEPPQCTSLAWSADGQTLFAGYTDNLIRVWQ.

The protein belongs to the WD repeat G protein beta family. Ribosomal protein RACK1 subfamily.

The protein localises to the cytoplasm. Functionally, involved in the recruitment, assembly and/or regulation of a variety of signaling molecules. Interacts with a wide variety of proteins and plays a role in many cellular processes. Required for VANGL2 membrane localization, inhibits Wnt signaling and regulates cellular polarization and oriented cell division during gastrulation. This is Small ribosomal subunit protein RACK1 (gnb2l1) from Danio rerio (Zebrafish).